Here is a 456-residue protein sequence, read N- to C-terminus: MFS-type transporter SLC18B1 (456 aa).

Methionine 1 carries the N-acetylmethionine modification. The tract at residues 1–24 (MEALGDLEGPRAPGGDDPAGSAGE) is disordered. The Cytoplasmic segment spans residues 1-33 (MEALGDLEGPRAPGGDDPAGSAGETPGWLSREQ). Over residues 10-23 (PRAPGGDDPAGSAG) the composition is skewed to low complexity. At serine 21 the chain carries Phosphoserine. Residues 34-54 (VFVLISAASVNLGSMMCYSIL) form a helical membrane-spanning segment. Over 55–70 (GPFFPKEAEKKGASNT) the chain is Extracellular. A helical transmembrane segment spans residues 71–91 (IIGMIFGCFALFELLASLVFG). Residues 92–100 (NYLVHIGAK) lie on the Cytoplasmic side of the membrane. Residues 101-121 (FMFVAGMFVSGGVTILFGVLD) form a helical membrane-spanning segment. Residues 122–127 (RVPDGP) are Extracellular-facing. A helical membrane pass occupies residues 128-148 (VFIAMCFLVRVMDAVSFAAAM). At 149–161 (TASSSILAKAFPN) the chain is on the cytoplasmic side. The helical transmembrane segment at 162-184 (NVATVLGSLETFSGLGLILGPPV) threads the bilayer. The Extracellular portion of the chain corresponds to 185–195 (GGFLYQSFGYE). Residues 196-216 (VPFIVLGCVVLLMVPLNMYIL) form a helical membrane-spanning segment. Residues 217-230 (PNYESDPGEHSFWK) lie on the Cytoplasmic side of the membrane. The helical transmembrane segment at 231–251 (LIALPKVGLIAFVINSLSSCF) threads the bilayer. Topologically, residues 252 to 272 (GFLDPTLSLFVLEKFNLPAGY) are extracellular. A helical membrane pass occupies residues 273-293 (VGLVFLGMALSYAISSPLFGL). The Cytoplasmic portion of the chain corresponds to 294-304 (LSDKRPPLRKW). The helical transmembrane segment at 305 to 325 (LLVFGNLITAGCYMLLGPVPI) threads the bilayer. At 326-331 (LHIKSQ) the chain is on the extracellular side. A helical membrane pass occupies residues 332–352 (LWLLVLILVVSGLSAGMSIIP). At 353–377 (TFPEILSCAHENGFEEGLSTLGLVS) the chain is on the cytoplasmic side. Residues 378 to 398 (GLFSAMWSIGAFMGPTLGGFL) form a helical membrane-spanning segment. Residues 399 to 407 (YEKIGFEWA) are Extracellular-facing. A helical transmembrane segment spans residues 408-428 (AAIQGLWALISGLAMGLFYLL). Residues 429-456 (EYSRRKRSKSQNILSTEEERTTLLPNET) are Cytoplasmic-facing. Serine 438 bears the Phosphoserine mark.

This sequence belongs to the major facilitator superfamily. Expressed in various tissues including lung, placenta, adrenal gland, liver, testis, and brain.

It is found in the cytoplasmic vesicle. It localises to the secretory vesicle membrane. The protein localises to the secretory vesicle. The protein resides in the synaptic vesicle membrane. The enzyme catalyses spermine(in) + n H(+)(out) = spermine(out) + n H(+)(in). It catalyses the reaction spermidine(in) + n H(+)(out) = spermidine(out) + n H(+)(in). It carries out the reaction serotonin(in) + n H(+)(out) = serotonin(out) + n H(+)(in). Its function is as follows. Proton-coupled polyamine antiporter involved in the translocation of polyamines from cytosol into secretory vesicles prior to their release via exocytosis. Uses the electrochemical proton gradient generated by a V-type proton-pumping ATPase to couple the efflux of protons with the uptake of a polyamine molecule. Facilitates vesicular storage of spermine and spermidine in astrocytes with an impact on glutamatergic neuronal transmission and memory formation. Upon antigen stimulation, regulates polyamine accumulation and release in mast cell secretory granules, which in turn potentiates mast cell degranulation and histamine secretion. The sequence is that of MFS-type transporter SLC18B1 from Homo sapiens (Human).